The chain runs to 432 residues: UPF0597 protein APL_1605 (432 aa).

The protein belongs to the UPF0597 family.

This is UPF0597 protein APL_1605 from Actinobacillus pleuropneumoniae serotype 5b (strain L20).